The primary structure comprises 82 residues: Small ribosomal subunit protein bS16 (82 aa).

It belongs to the bacterial ribosomal protein bS16 family.

This Clostridium botulinum (strain ATCC 19397 / Type A) protein is Small ribosomal subunit protein bS16.